An 82-amino-acid polypeptide reads, in one-letter code: Small ribosomal subunit protein bS16c (82 aa).

This sequence belongs to the bacterial ribosomal protein bS16 family.

It is found in the plastid. The protein localises to the chloroplast. The polypeptide is Small ribosomal subunit protein bS16c (Pyropia yezoensis (Susabi-nori)).